The sequence spans 574 residues: MSEHAAAPGPGPNGGGGGGAAPVRGPRGPNLNPNPLINVRDRLFHALFFKMAVTYSRLFPPAFRRLFEFFVLLKALFVLFVLAYIHIVFSRSPINCLEHVRDRWPREGVLRVEVRHNSSRAPVILQFCDGGLGGLELEPGGLELEEEELTVEMFTNSSIKFELDIEPKVFKPQSGADALNDSQDFPFPETPAKVWPQDEYIVEYSLEYGFLRLSQATRQRLSIPVMVVTLDPTRDQCFGDRFSRLLLDEFLGYDDILMSSVKGLAENEENKGFLRNVVSGEHYRFVSMWMARTSYLAAFVIMVIFTLSVSMLLRYSHHQIFVFIVDLLQMLEMNMAIAFPAAPLLTVILALVGMEAIMSEFFNDTTTAFYIILTVWLADQYDAICCHTNTSKRHWLRFFYLYHFAFYAYHYRFNGQYSSLALVTSWLFIQHSMIYFFHHYELPAILQQIRIQEMLLQTPPLGPGTPTALPDDLNNNSGSPATPDPSPPLALGPSSSPAPTGGASGPGSLGAGASVSGSDLGWVAETAAIISDASFLSGLSASLLERRPTAPSTPDSSRPDPGVPLEDAPAPAGS.

The tract at residues 1–27 (MSEHAAAPGPGPNGGGGGGAAPVRGPR) is disordered. S2 carries the post-translational modification N-acetylserine. A helical membrane pass occupies residues 69–89 (FFVLLKALFVLFVLAYIHIVF). N-linked (GlcNAc...) asparagine glycosylation is present at N180. 3 consecutive transmembrane segments (helical) span residues 293–313 (TSYL…SMLL), 337–357 (IAFP…MEAI), and 417–437 (YSSL…IYFF). Low complexity-rich tracts occupy residues 461 to 470 (LGPGTPTALP) and 491 to 501 (LGPSSSPAPTG). Disordered stretches follow at residues 461–515 (LGPG…GASV) and 546–574 (RRPT…PAGS).

It belongs to the membralin family. Interacts with ERLIN2. In terms of tissue distribution, detected in brain, spinal cord, lung, liver and kidney.

It is found in the endoplasmic reticulum membrane. Its function is as follows. May have a role in the ERAD pathway required for clearance of misfolded proteins in the endoplasmic reticulum (ER). Promotes survival of motor neurons, probably by protecting against ER stress. The chain is Membralin (Tmem259) from Mus musculus (Mouse).